The primary structure comprises 427 residues: Histidine--tRNA ligase (427 aa).

This sequence belongs to the class-II aminoacyl-tRNA synthetase family. As to quaternary structure, homodimer.

The protein resides in the cytoplasm. The enzyme catalyses tRNA(His) + L-histidine + ATP = L-histidyl-tRNA(His) + AMP + diphosphate + H(+). The protein is Histidine--tRNA ligase of Streptococcus suis (strain 98HAH33).